The primary structure comprises 304 residues: Glutaminase (304 aa).

The substrate site is built by S63, N114, E158, N165, Y189, Y240, and V258.

The protein belongs to the glutaminase family. As to quaternary structure, homotetramer.

The catalysed reaction is L-glutamine + H2O = L-glutamate + NH4(+). The polypeptide is Glutaminase (Shewanella sp. (strain ANA-3)).